A 321-amino-acid polypeptide reads, in one-letter code: uncharacterized protein (321 aa).

The signal sequence occupies residues 1 to 18; the sequence is MKKMKKLLLLLSASFAFS.

This is an uncharacterized protein from Aquifex aeolicus (strain VF5).